A 537-amino-acid polypeptide reads, in one-letter code: Cytochrome P450 4F6 (537 aa).

Residue Cys-468 coordinates heme.

This sequence belongs to the cytochrome P450 family. The cofactor is heme. As to expression, high expression in liver and kidney. Lower expression in brain.

Its subcellular location is the endoplasmic reticulum membrane. The protein resides in the microsome membrane. The catalysed reaction is an organic molecule + reduced [NADPH--hemoprotein reductase] + O2 = an alcohol + oxidized [NADPH--hemoprotein reductase] + H2O + H(+). This is Cytochrome P450 4F6 (Cyp4f6) from Rattus norvegicus (Rat).